A 132-amino-acid polypeptide reads, in one-letter code: Small ribosomal subunit protein uS8 (132 aa).

The protein belongs to the universal ribosomal protein uS8 family. Part of the 30S ribosomal subunit. Contacts proteins S5 and S12.

In terms of biological role, one of the primary rRNA binding proteins, it binds directly to 16S rRNA central domain where it helps coordinate assembly of the platform of the 30S subunit. This chain is Small ribosomal subunit protein uS8, found in Psychrobacter arcticus (strain DSM 17307 / VKM B-2377 / 273-4).